The sequence spans 957 residues: Sorting nexin-13 (957 aa).

The 188-residue stretch at 97 to 284 folds into the PXA domain; the sequence is ANIIDEPLQQ…YVIWMIRDSN (188 aa). Residues 373–511 form the RGS domain; the sequence is PLDSILVDNV…SFRQNALYVR (139 aa). One can recognise a PX domain in the interval 559-680; it reads VQLHAYISDT…DFLENKAYSK (122 aa). A 1,2-diacyl-sn-glycero-3-phospho-(1D-myo-inositol-3-phosphate) is bound by residues R601, S603, K628, and R642.

The protein belongs to the sorting nexin family.

It is found in the early endosome membrane. Its function is as follows. May be involved in several stages of intracellular trafficking. Acts as a GAP for Galphas. May play a role in endosome homeostasis. The chain is Sorting nexin-13 (Snx13) from Mus musculus (Mouse).